A 291-amino-acid chain; its full sequence is Serine/threonine-protein phosphatase Pgam5, mitochondrial (291 aa).

A helical membrane pass occupies residues 7–23 (FACGTGAGLAAFYLQRL). Residues 59–78 (KSLVRPQKNEQPQEQNRYNS) form a disordered region. Positions 67–77 (NEQPQEQNRYN) are enriched in polar residues.

This sequence belongs to the phosphoglycerate mutase family. BPG-dependent PGAM subfamily. As to quaternary structure, interacts with Pk92B/ASK1.

The protein resides in the mitochondrion outer membrane. It catalyses the reaction O-phospho-L-seryl-[protein] + H2O = L-seryl-[protein] + phosphate. The enzyme catalyses O-phospho-L-threonyl-[protein] + H2O = L-threonyl-[protein] + phosphate. Its function is as follows. Displays phosphatase activity for serine/threonine residues, and dephosphorylates and activates Pk92B kinase. Has apparently no phosphoglycerate mutase activity. The chain is Serine/threonine-protein phosphatase Pgam5, mitochondrial from Drosophila willistoni (Fruit fly).